The sequence spans 1258 residues: MEEEDESRGKTEESGEDRGDGPPDRDPALSPSAFILRAIQQAVGSSLQGDLPNDKDGSRCCGLQWRRCCRSPRSEPRSQESGGADMATVLDTAADSFLVELVSILDPPDTWVPSHLDLQPGESEDVLELVAEVRIGDRDPMPLPVPSLLPRLRAWRTGKTVSPQSHASRPACSRHLLTLGTGDGGPAPPPAPSSASSSPSPSPSSSSPSPPPPPPPPPPPALPAPRFDIYDPFHPTDEAYSPPPAPEQKYDPFEPTGSNPSSSAGTPSPEEEEEEEEEEEEEGLSQSISRISETLAGIYDDNSLSQDFPGDDSPHREPPPPQTLGAPGTPPQADSTRAEGAPRRRVFVVGPEAEACLEGKVSVEVVTTAGGPALPLPPLPPTDPEIEEGEIVQPEEEPRVAVSLFRAARPRQPPASVATLASVAAPAAPPASAPRAPEGDDFLSLHADSDGEGALQVDLGEPPAPPAADARWGGLDLRRKILTQRRERYRQRSASPGPPPARKKARRERQRSGDPAPPDSPTWEAKKHRSRERKLGSHSTARRRSRSRSRRRSRSRSADRRRGSHRSRSREKRRRRRRSASPPPAASSSSSSRRERHRGKRREGGKKKKKRSRSRAEKRSGDLEKLPAPVPPSGSDRDSRRRGAVPPSIQDLTDHDLFAIKRTITVGRPDKTEPRAPSPAPAVSPKREVLYDSEGLSADERGAKGDKDRRRSGAASSSSSSREKASRRKALDGDRGRDRDRSSKKTRPPKDSAPGSGALPKAPPSSGSSSSSSSCSSRKVKLQSKVAVLIREGVSSTTPAKDSSSSGLGSIGVKFSRDRESRSPFLKPDERAPAEGVKVAPGSTKPKKTKAKAKAGAKKAKGTKGKTKPSKTRKKVRSGGSSTASGGPGSLKKSKADSCSQAASAKGTEETSWSGEERTTKAPSTPPPKVAPPPPALTPDSQTVDSSCKTPEVSFLPEEASEDTGVRVGAEEEEEEEEEEEEEEEQQPATTTATSTAAAAPSTAPSAGSTAGDSGAEDGPAARASQLPTLPPPMPWNLPAGVDCTTSGVLALTALLFKMEEANLASRAKAQELIQATNQILSHRKPPSTLGVTPAPVPTSLGLPPGPSSYLLPGSLPIGGCGSTPPTPTGLVPASDKREGSSSSEGRGDTDKYLKKLHTQERAVEEVKLAIKPYYQKKDITKEEYKDILRKAVHKICHSKSGEINPVKVSNLVRAYVQRYRYFRKHGRKPGDPPGPPRPPKEPGPPDKGGPGLPLPPL.

Disordered stretches follow at residues 1-32, 159-345, 370-398, 410-1034, 1114-1154, and 1223-1258; these read MEEE…LSPS, KTVS…PRRR, GGPA…EEEP, PRQP…PPPM, GSLP…DKYL, and FRKH…LPPL. Residues 7 to 27 show a composition bias toward basic and acidic residues; sequence SRGKTEESGEDRGDGPPDRDP. The span at 193–207 shows a compositional bias: low complexity; it reads SSASSSPSPSPSSSS. Positions 208-223 are enriched in pro residues; sequence PSPPPPPPPPPPPALP. Positions 228–237 are enriched in basic and acidic residues; the sequence is DIYDPFHPTD. At Ser241 the chain carries Phosphoserine. The segment covering 256–266 has biased composition (polar residues); it reads TGSNPSSSAGT. Residues 269-283 show a composition bias toward acidic residues; the sequence is PEEEEEEEEEEEEEG. Position 329 is a phosphothreonine (Thr329). Residues 374-383 show a composition bias toward pro residues; the sequence is LPLPPLPPTD. Residues 384-395 show a composition bias toward acidic residues; sequence PEIEEGEIVQPE. A compositionally biased stretch (low complexity) spans 414–426; it reads PASVATLASVAAP. Phosphoserine is present on residues Ser444 and Ser449. The span at 480–491 shows a compositional bias: basic residues; sequence KILTQRRERYRQ. Phosphoserine is present on residues Ser493, Ser495, Ser512, and Ser520. Basic residues-rich tracts occupy residues 540–555 and 562–579; these read TARR…RSRS and RGSH…RRRS. Residues Ser579 and Ser581 each carry the phosphoserine modification. Residues 594–613 show a composition bias toward basic residues; that stretch reads RERHRGKRREGGKKKKKRSR. Basic and acidic residues predominate over residues 614–625; sequence SRAEKRSGDLEK. At Thr665 the chain carries Phosphothreonine. A phosphoserine mark is found at Ser678 and Ser684. Position 691 is a phosphotyrosine (Tyr691). Residues Ser693 and Ser697 each carry the phosphoserine modification. Composition is skewed to basic and acidic residues over residues 698-711 and 721-743; these read ADER…DRRR and SREK…DRSS. Low complexity-rich tracts occupy residues 752-777 and 795-806; these read SAPG…SCSS and SSTTPAKDSSSS. Lys814 is covalently cross-linked (Glycyl lysine isopeptide (Lys-Gly) (interchain with G-Cter in SUMO2)). Positions 815–833 are enriched in basic and acidic residues; it reads FSRDRESRSPFLKPDERAP. A phosphoserine mark is found at Ser821 and Ser823. Residues 845-877 are compositionally biased toward basic residues; that stretch reads KPKKTKAKAKAGAKKAKGTKGKTKPSKTRKKVR. Ser878, Ser885, Ser912, and Ser914 each carry phosphoserine. Residues 924-937 show a composition bias toward pro residues; the sequence is STPPPKVAPPPPAL. A phosphothreonine mark is found at Thr925 and Thr938. Polar residues predominate over residues 940–949; that stretch reads DSQTVDSSCK. At Ser941 the chain carries Phosphoserine. Phosphothreonine is present on Thr950. Positions 971-986 are enriched in acidic residues; that stretch reads EEEEEEEEEEEEEEEQ. Residues 987–1019 are compositionally biased toward low complexity; the sequence is QPATTTATSTAAAAPSTAPSAGSTAGDSGAEDG. The necessary for interaction with the CTD domain of POLR2A stretch occupies residues 1133-1258; that stretch reads PASDKREGSS…GGPGLPLPPL (126 aa). Over residues 1135–1154 the composition is skewed to basic and acidic residues; it reads SDKREGSSSSEGRGDTDKYL. A compositionally biased stretch (pro residues) spans 1246–1258; the sequence is PDKGGPGLPLPPL.

This sequence belongs to the splicing factor SR family. In terms of assembly, interacts with POLR2A.

The protein localises to the nucleus. Its function is as follows. May function in pre-mRNA splicing. The chain is Splicing factor, arginine/serine-rich 19 (Scaf1) from Rattus norvegicus (Rat).